The following is a 790-amino-acid chain: uncharacterized protein (790 aa).

The TBDR plug domain occupies 37-172 (APVPVPVNGN…NGGVIDAKIK (136 aa)). One can recognise a TBDR beta-barrel domain in the interval 178 to 790 (DSKVKLGYRT…TFWLDVSMKF (613 aa)).

It belongs to the TonB-dependent receptor family.

Its subcellular location is the cell outer membrane. This is an uncharacterized protein from Escherichia coli (strain K12).